A 183-amino-acid chain; its full sequence is UPF0302 protein BH3876 (183 aa).

The protein belongs to the UPF0302 family.

In Halalkalibacterium halodurans (strain ATCC BAA-125 / DSM 18197 / FERM 7344 / JCM 9153 / C-125) (Bacillus halodurans), this protein is UPF0302 protein BH3876.